Consider the following 245-residue polypeptide: Ribonuclease PH (245 aa).

Residues Arg-86 and 124–126 each bind phosphate; that span reads GTR.

Belongs to the RNase PH family. In terms of assembly, homohexameric ring arranged as a trimer of dimers.

It carries out the reaction tRNA(n+1) + phosphate = tRNA(n) + a ribonucleoside 5'-diphosphate. Phosphorolytic 3'-5' exoribonuclease that plays an important role in tRNA 3'-end maturation. Removes nucleotide residues following the 3'-CCA terminus of tRNAs; can also add nucleotides to the ends of RNA molecules by using nucleoside diphosphates as substrates, but this may not be physiologically important. Probably plays a role in initiation of 16S rRNA degradation (leading to ribosome degradation) during starvation. The protein is Ribonuclease PH of Bacillus anthracis (strain A0248).